The sequence spans 270 residues: Glutamate racemase (270 aa).

Substrate-binding positions include 7-8 (DS) and 39-40 (YG). The active-site Proton donor/acceptor is the Cys70. 71 to 72 (NT) serves as a coordination point for substrate. Residue Cys194 is the Proton donor/acceptor of the active site. 195 to 196 (TH) provides a ligand contact to substrate.

The protein belongs to the aspartate/glutamate racemases family.

The enzyme catalyses L-glutamate = D-glutamate. It participates in cell wall biogenesis; peptidoglycan biosynthesis. Functionally, provides the (R)-glutamate required for cell wall biosynthesis. The polypeptide is Glutamate racemase (Paracoccus denitrificans (strain Pd 1222)).